The chain runs to 256 residues: Acetyl-coenzyme A carboxylase carboxyl transferase subunit alpha (256 aa).

The 236-residue stretch at 1 to 236 folds into the CoA carboxyltransferase C-terminal domain; that stretch reads MSDVARILKE…KTAIVDELAE (236 aa).

The protein belongs to the AccA family. As to quaternary structure, acetyl-CoA carboxylase is a heterohexamer composed of biotin carboxyl carrier protein (AccB), biotin carboxylase (AccC) and two subunits each of ACCase subunit alpha (AccA) and ACCase subunit beta (AccD).

It localises to the cytoplasm. It catalyses the reaction N(6)-carboxybiotinyl-L-lysyl-[protein] + acetyl-CoA = N(6)-biotinyl-L-lysyl-[protein] + malonyl-CoA. The protein operates within lipid metabolism; malonyl-CoA biosynthesis; malonyl-CoA from acetyl-CoA: step 1/1. Its function is as follows. Component of the acetyl coenzyme A carboxylase (ACC) complex. First, biotin carboxylase catalyzes the carboxylation of biotin on its carrier protein (BCCP) and then the CO(2) group is transferred by the carboxyltransferase to acetyl-CoA to form malonyl-CoA. The protein is Acetyl-coenzyme A carboxylase carboxyl transferase subunit alpha of Streptococcus thermophilus (strain CNRZ 1066).